A 159-amino-acid chain; its full sequence is Ribosomal RNA large subunit methyltransferase H (159 aa).

S-adenosyl-L-methionine-binding positions include L76, G108, and F127–F132.

Belongs to the RNA methyltransferase RlmH family. As to quaternary structure, homodimer.

The protein localises to the cytoplasm. The enzyme catalyses pseudouridine(1915) in 23S rRNA + S-adenosyl-L-methionine = N(3)-methylpseudouridine(1915) in 23S rRNA + S-adenosyl-L-homocysteine + H(+). In terms of biological role, specifically methylates the pseudouridine at position 1915 (m3Psi1915) in 23S rRNA. This is Ribosomal RNA large subunit methyltransferase H from Staphylococcus carnosus (strain TM300).